The sequence spans 220 residues: MEEEELSKLLANVKIDPSLTSRISQIDSFKLSELMVLKTDIETQLEAYFSVLEQQGIGMDSALVTPDGYPRSDVDVLQVTMIRKNVNMLKNDLNHLLQRSHVLLNQHFDNMNVKSNQDARRNNDDQAIQYTIPFAFISEVVPGSPSDKADIKVDDKLISIGNVHAANHSKLQNIQMVVMKNEDRPLPVLLLREGQILKTSLTPSRNWNGRGLLGCRIQEL.

One can recognise a PDZ domain in the interval 119–196 (ARRNNDDQAI…PVLLLREGQI (78 aa)).

The protein belongs to the proteasome subunit p27 family. Part of a transient complex containing NAS2, RPT4 and RPT5 formed during the assembly of the 26S proteasome.

Acts as a chaperone during the assembly of the 26S proteasome, specifically of the base subcomplex of the 19S regulatory complex (RC). During the base subcomplex assembly is part of a NAS2:RPT4:RPT5 module; NAS2 is released during the further base assembly process. The sequence is that of Probable 26S proteasome regulatory subunit p27 (NAS2) from Saccharomyces cerevisiae (strain ATCC 204508 / S288c) (Baker's yeast).